A 296-amino-acid chain; its full sequence is MKDKLVKAIAKDGQVRIIGAITTELVNEGVKLHNCAPTAAAALGRMLTAGALMGTTLKSEKDTLTLQIHGGGIAKGVVVTSYADGHVKGYIGNPTADIEPNSKGKLDVSGIIGKNGNLLVIRDMGLKEPYIGQVPIYTGEIGEDLAYYYTVSEQTPSAVGLGVLVDKDLSIKSAGGFIIQMMPGADEMLADLISYRLEEIPSITEMISKGMTIEEILEYIFEDMDLKILESIAPEYRCDCSREKVERALASIGQKDLKEIYDEGKEEELKCHFCNKAYVFSHDEVGDILENYYSEK.

Intrachain disulfides connect Cys-238/Cys-240 and Cys-271/Cys-274.

The protein belongs to the HSP33 family. Post-translationally, under oxidizing conditions two disulfide bonds are formed involving the reactive cysteines. Under reducing conditions zinc is bound to the reactive cysteines and the protein is inactive.

It localises to the cytoplasm. Its function is as follows. Redox regulated molecular chaperone. Protects both thermally unfolding and oxidatively damaged proteins from irreversible aggregation. Plays an important role in the bacterial defense system toward oxidative stress. In Clostridium botulinum (strain Okra / Type B1), this protein is 33 kDa chaperonin.